The primary structure comprises 188 residues: Large ribosomal subunit protein eL18 (188 aa).

K119 is covalently cross-linked (Glycyl lysine isopeptide (Lys-Gly) (interchain with G-Cter in SUMO2)). Phosphoserine is present on S130. Residues 151–188 (HFGKAPGTPHSHTKPYVRSKGRKFERARGRRASRGYKN) are disordered. T158 bears the Phosphothreonine mark. 2 stretches are compositionally biased toward basic residues: residues 161 to 171 (SHTKPYVRSKG) and 178 to 188 (RGRRASRGYKN). K164 participates in a covalent cross-link: Glycyl lysine isopeptide (Lys-Gly) (interchain with G-Cter in SUMO2).

Belongs to the eukaryotic ribosomal protein eL18 family. As to quaternary structure, component of the large ribosomal subunit.

The protein resides in the cytoplasm. Its subcellular location is the cytosol. It localises to the rough endoplasmic reticulum. Functionally, component of the large ribosomal subunit. The ribosome is a large ribonucleoprotein complex responsible for the synthesis of proteins in the cell. The polypeptide is Large ribosomal subunit protein eL18 (RPL18) (Homo sapiens (Human)).